We begin with the raw amino-acid sequence, 1090 residues long: Aminopeptidase-like protein AC3.5 (1090 aa).

Topologically, residues 1 to 77 (MEDVDLGKDR…KPKKRIACSP (77 aa)) are cytoplasmic. The span at 21–33 (GNGSASNLNNRNN) shows a compositional bias: low complexity. Residues 21-71 (GNGSASNLNNRNNIPLSEKAAKEPLQTQPQEAPPAPKPKVQKQKPPVKPKK) form a disordered region. Residues 59–71 (KVQKQKPPVKPKK) show a composition bias toward basic residues. A helical; Signal-anchor for type II membrane protein membrane pass occupies residues 78 to 98 (GSAICLFLLAVAAIIFAAFLG). Residues 99 to 1090 (HYLTKQNYEM…DEMESSEEQE (992 aa)) lie on the Lumenal side of the membrane. Asparagine 115, asparagine 123, asparagine 143, asparagine 176, and asparagine 230 each carry an N-linked (GlcNAc...) asparagine glycan. The segment at 217-259 (VTKRAKKSVDSGTNSTSEMPEGSGEEAMATTATTTTTESTTPV) is disordered. Residues 241 to 257 (EEAMATTATTTTTESTT) are compositionally biased toward low complexity. Residues asparagine 402, asparagine 710, asparagine 723, asparagine 789, asparagine 894, asparagine 919, asparagine 964, and asparagine 993 are each glycosylated (N-linked (GlcNAc...) asparagine). Residues 1069–1080 (YLDGKMKGPAKD) show a composition bias toward basic and acidic residues. The tract at residues 1069–1090 (YLDGKMKGPAKDDEMESSEEQE) is disordered. The span at 1081 to 1090 (DEMESSEEQE) shows a compositional bias: acidic residues.

It belongs to the peptidase M1 family.

Its subcellular location is the membrane. The sequence is that of Aminopeptidase-like protein AC3.5 from Caenorhabditis elegans.